The primary structure comprises 448 residues: MSHRYIPLTEKDKQEMLQTIGAKSIGELFGDVPSDILLNRDLNIAEGEAETTLLRRLNRIASKNITKETHTSFLGAGVYDHYAPSVVDAMISRSEFYTAYTPYQPEISQGELQAIFEFQTLICELTDMDVANSSMYDGMTSFAEACILAFSQTKKNKIVVSKGLHYQALQVLHTYAKTRKEFEVVEIDLDGTVTDLKKLEAAVDDETAAVAVQYPNFYGSIEDLEKIHSFIEDKKALFIVYANPLALGLLTPPGSFGADIVVGDTQPFGIPAQFGGPHCGYFATTKKLMRKVPGRLVGQTQDDEGNRGFVLTLQAREQHIRRDKATSNICSNQALNALASSIAMSALGKQGIYDIAVQNIEHANYAKQQFIKKGFEVLDGTSFNEFVVKFDKPIQQVNEELVKYNIIGGFDLGVVSDDFKNHMLIAVTELRTKDEIDTFVEKAGELND.

It belongs to the GcvP family. N-terminal subunit subfamily. As to quaternary structure, the glycine cleavage system is composed of four proteins: P, T, L and H. In this organism, the P 'protein' is a heterodimer of two subunits.

The enzyme catalyses N(6)-[(R)-lipoyl]-L-lysyl-[glycine-cleavage complex H protein] + glycine + H(+) = N(6)-[(R)-S(8)-aminomethyldihydrolipoyl]-L-lysyl-[glycine-cleavage complex H protein] + CO2. In terms of biological role, the glycine cleavage system catalyzes the degradation of glycine. The P protein binds the alpha-amino group of glycine through its pyridoxal phosphate cofactor; CO(2) is released and the remaining methylamine moiety is then transferred to the lipoamide cofactor of the H protein. This chain is Probable glycine dehydrogenase (decarboxylating) subunit 1, found in Staphylococcus aureus (strain USA300).